Reading from the N-terminus, the 691-residue chain is DNA ligase (691 aa).

NAD(+) is bound by residues 41–45, 90–91, and Glu-130; these read DAEYD and SL. Catalysis depends on Lys-132, which acts as the N6-AMP-lysine intermediate. The NAD(+) site is built by Arg-153, Glu-190, Lys-307, and Lys-331. Zn(2+)-binding residues include Cys-425, Cys-428, Cys-443, and Cys-449. Residues 610–691 form the BRCT domain; that stretch reads APQGVLAGKT…LHQLLEGNTQ (82 aa).

The protein belongs to the NAD-dependent DNA ligase family. LigA subfamily. Mg(2+) serves as cofactor. Requires Mn(2+) as cofactor.

The enzyme catalyses NAD(+) + (deoxyribonucleotide)n-3'-hydroxyl + 5'-phospho-(deoxyribonucleotide)m = (deoxyribonucleotide)n+m + AMP + beta-nicotinamide D-nucleotide.. Functionally, DNA ligase that catalyzes the formation of phosphodiester linkages between 5'-phosphoryl and 3'-hydroxyl groups in double-stranded DNA using NAD as a coenzyme and as the energy source for the reaction. It is essential for DNA replication and repair of damaged DNA. The sequence is that of DNA ligase from Burkholderia vietnamiensis (strain G4 / LMG 22486) (Burkholderia cepacia (strain R1808)).